The sequence spans 176 residues: NAD(P)H-quinone oxidoreductase subunit 6, chloroplastic (176 aa).

Helical transmembrane passes span 10 to 30 (FLLV…VLLP), 32 to 52 (PIFS…LYIL), 61 to 81 (AQLL…VMFM), 92 to 112 (LWTV…FLLM), and 152 to 172 (FFLP…GAIS).

This sequence belongs to the complex I subunit 6 family. NDH is composed of at least 16 different subunits, 5 of which are encoded in the nucleus.

The protein localises to the plastid. It localises to the chloroplast thylakoid membrane. The catalysed reaction is a plastoquinone + NADH + (n+1) H(+)(in) = a plastoquinol + NAD(+) + n H(+)(out). It catalyses the reaction a plastoquinone + NADPH + (n+1) H(+)(in) = a plastoquinol + NADP(+) + n H(+)(out). NDH shuttles electrons from NAD(P)H:plastoquinone, via FMN and iron-sulfur (Fe-S) centers, to quinones in the photosynthetic chain and possibly in a chloroplast respiratory chain. The immediate electron acceptor for the enzyme in this species is believed to be plastoquinone. Couples the redox reaction to proton translocation, and thus conserves the redox energy in a proton gradient. The sequence is that of NAD(P)H-quinone oxidoreductase subunit 6, chloroplastic (ndhG) from Capsella bursa-pastoris (Shepherd's purse).